We begin with the raw amino-acid sequence, 448 residues long: Trigger factor (448 aa).

The PPIase FKBP-type domain occupies 160-245 (GDMLLMKVES…IQEIREEKLP (86 aa)).

The protein belongs to the FKBP-type PPIase family. Tig subfamily.

The protein localises to the cytoplasm. The enzyme catalyses [protein]-peptidylproline (omega=180) = [protein]-peptidylproline (omega=0). Involved in protein export. Acts as a chaperone by maintaining the newly synthesized protein in an open conformation. Functions as a peptidyl-prolyl cis-trans isomerase. This Dehalococcoides mccartyi (strain ATCC BAA-2266 / KCTC 15142 / 195) (Dehalococcoides ethenogenes (strain 195)) protein is Trigger factor.